We begin with the raw amino-acid sequence, 422 residues long: Glutamyl-tRNA reductase (422 aa).

Substrate-binding positions include 49 to 52 (TCNR), Ser108, 113 to 115 (EPQ), and Gln119. Catalysis depends on Cys50, which acts as the Nucleophile. 188–193 (GAGQTI) provides a ligand contact to NADP(+).

It belongs to the glutamyl-tRNA reductase family. As to quaternary structure, homodimer.

It carries out the reaction (S)-4-amino-5-oxopentanoate + tRNA(Glu) + NADP(+) = L-glutamyl-tRNA(Glu) + NADPH + H(+). Its pathway is porphyrin-containing compound metabolism; protoporphyrin-IX biosynthesis; 5-aminolevulinate from L-glutamyl-tRNA(Glu): step 1/2. Catalyzes the NADPH-dependent reduction of glutamyl-tRNA(Glu) to glutamate 1-semialdehyde (GSA). The protein is Glutamyl-tRNA reductase of Marinomonas sp. (strain MWYL1).